A 167-amino-acid chain; its full sequence is Putative 4-hydroxy-4-methyl-2-oxoglutarate aldolase (167 aa).

Substrate is bound by residues 81–84 (GDII) and Arg103. A divalent metal cation is bound at residue Asp104.

It belongs to the class II aldolase/RraA-like family. As to quaternary structure, homotrimer. A divalent metal cation serves as cofactor.

The enzyme catalyses 4-hydroxy-4-methyl-2-oxoglutarate = 2 pyruvate. It carries out the reaction oxaloacetate + H(+) = pyruvate + CO2. Functionally, catalyzes the aldol cleavage of 4-hydroxy-4-methyl-2-oxoglutarate (HMG) into 2 molecules of pyruvate. Also contains a secondary oxaloacetate (OAA) decarboxylase activity due to the common pyruvate enolate transition state formed following C-C bond cleavage in the retro-aldol and decarboxylation reactions. This is Putative 4-hydroxy-4-methyl-2-oxoglutarate aldolase from Corynebacterium jeikeium (strain K411).